The sequence spans 197 residues: MSLQIDAVILAGGMARRMGGDDKGLVELNGKAMIEHTIERIKPQVKEILINANRNQTRYAEFGFTVLSDEHTGFLGPLAGMITAMGHTQADYLLVVPCDCPLLPRDLVARLLAAIKANDAELAVASDGEREQPVVMLLKPSLRESMTAFLEAGERKIDFWYAKHRFAVAAFADQPNAFVNVNTPEQKQRLAAEINQS.

GTP contacts are provided by residues 10-12, Lys23, Asn51, Asp69, and Asp99; that span reads LAG. Asp99 contacts Mg(2+).

It belongs to the MobA family. In terms of assembly, monomer. Mg(2+) is required as a cofactor.

The protein localises to the cytoplasm. The catalysed reaction is Mo-molybdopterin + GTP + H(+) = Mo-molybdopterin guanine dinucleotide + diphosphate. In terms of biological role, transfers a GMP moiety from GTP to Mo-molybdopterin (Mo-MPT) cofactor (Moco or molybdenum cofactor) to form Mo-molybdopterin guanine dinucleotide (Mo-MGD) cofactor. This Shewanella sp. (strain MR-4) protein is Molybdenum cofactor guanylyltransferase.